The chain runs to 185 residues: Ribosome-recycling factor (185 aa).

It belongs to the RRF family.

It is found in the cytoplasm. Its function is as follows. Responsible for the release of ribosomes from messenger RNA at the termination of protein biosynthesis. May increase the efficiency of translation by recycling ribosomes from one round of translation to another. The polypeptide is Ribosome-recycling factor (Mycolicibacterium vanbaalenii (strain DSM 7251 / JCM 13017 / BCRC 16820 / KCTC 9966 / NRRL B-24157 / PYR-1) (Mycobacterium vanbaalenii)).